We begin with the raw amino-acid sequence, 136 residues long: Putative pre-16S rRNA nuclease (136 aa).

This sequence belongs to the YqgF nuclease family.

Its subcellular location is the cytoplasm. Functionally, could be a nuclease involved in processing of the 5'-end of pre-16S rRNA. This Francisella tularensis subsp. novicida (strain U112) protein is Putative pre-16S rRNA nuclease.